We begin with the raw amino-acid sequence, 272 residues long: Universal stress protein MT2699 (272 aa).

ATP contacts are provided by residues Gly-15, 109–115 (GSVGIGR), and 123–124 (ST).

The protein belongs to the universal stress protein A family.

The chain is Universal stress protein MT2699 from Mycobacterium tuberculosis (strain CDC 1551 / Oshkosh).